We begin with the raw amino-acid sequence, 241 residues long: MSEEKNDALVGEVNTDNADNQVWLIKVPKFLSESWQKIGQGEIGQIHIKGGDNISLSYGPDVGQEFQLITTANTLDNQPLKIFSEDKDGALALEGNIGLRCDIKIDVESPQYRDLMKSRHTKYNTKTRMTQVIDESELFTPTLFDANKVKVSTVGITQKKKSTDKKEKLPEDEVLDLIFSAFRAEKHLDLKTLESFTEQPKNHLKTILEKVCILNKRGPYHHLYELKPEFRDKDNSKDEKK.

The protein belongs to the TFIIF beta subunit family. In terms of assembly, heterodimer of an alpha and a beta subunit.

Its subcellular location is the nucleus. In terms of biological role, TFIIF is a general transcription initiation factor that binds to RNA polymerase II and helps to recruit it to the initiation complex in collaboration with TFIIB. The chain is General transcription factor IIF subunit 2 (gtf2f2) from Dictyostelium discoideum (Social amoeba).